Consider the following 544-residue polypeptide: Involucrin (544 aa).

A disordered region spans residues 1–520 (MSQQHTLPVT…GQVQGIQQAL (520 aa)). Positions 76–90 (EQQQQPQEQKLQQQH) are enriched in low complexity. Composition is skewed to basic and acidic residues over residues 96–117 (EHQK…REKQ), 124–152 (EEEK…KEQL), 202–234 (QLKH…KQSE), 252–271 (QLKH…HQEG), 283–297 (KHLE…HPEQ), 304–347 (QLEE…HPEQ), 354–411 (QLEE…REEQ), 423–437 (KHLE…HPEQ), and 462–476 (KHLE…HPEQ). Residues 477–494 (QEGQLKPQEQQEGQLKGL) show a composition bias toward low complexity.

Belongs to the involucrin family. In terms of assembly, directly or indirectly cross-linked to cornifelin (CNFN). Post-translationally, substrate of transglutaminase. Specific glutamines or lysines are cross-linked to keratins, desmoplakin and to inter involucrin molecules. As to expression, keratinocytes of epidermis and other stratified squamous epithelia.

The protein resides in the cytoplasm. Functionally, part of the insoluble cornified cell envelope (CE) of stratified squamous epithelia. In Aotus trivirgatus (Three-striped night monkey), this protein is Involucrin (IVL).